The sequence spans 279 residues: Oxygen-dependent coproporphyrinogen-III oxidase (279 aa).

Residue serine 102 coordinates substrate. Residues histidine 106 and histidine 116 each contribute to the a divalent metal cation site. Histidine 116 (proton donor) is an active-site residue. 118–120 (NTR) contacts substrate. 2 residues coordinate a divalent metal cation: histidine 149 and histidine 179. The tract at residues 244 to 279 (YVEFNLLYDRGTKFGLMTDGNVEAILMSLPPEVKFN) is important for dimerization.

The protein belongs to the aerobic coproporphyrinogen-III oxidase family. In terms of assembly, homodimer. It depends on a divalent metal cation as a cofactor.

The protein localises to the cytoplasm. The catalysed reaction is coproporphyrinogen III + O2 + 2 H(+) = protoporphyrinogen IX + 2 CO2 + 2 H2O. Its pathway is porphyrin-containing compound metabolism; protoporphyrin-IX biosynthesis; protoporphyrinogen-IX from coproporphyrinogen-III (O2 route): step 1/1. In terms of biological role, involved in the heme biosynthesis. Catalyzes the aerobic oxidative decarboxylation of propionate groups of rings A and B of coproporphyrinogen-III to yield the vinyl groups in protoporphyrinogen-IX. The sequence is that of Oxygen-dependent coproporphyrinogen-III oxidase from Rickettsia peacockii (strain Rustic).